Reading from the N-terminus, the 697-residue chain is Methionine--tRNA ligase (697 aa).

Positions proline 11 to histidine 21 match the 'HIGH' region motif. Residues cysteine 142, cysteine 145, cysteine 155, and cysteine 158 each contribute to the Zn(2+) site. The 'KMSKS' region motif lies at lysine 343 to serine 347. An ATP-binding site is contributed by lysine 346. The tRNA-binding domain occupies aspartate 595–alanine 697.

The protein belongs to the class-I aminoacyl-tRNA synthetase family. MetG type 1 subfamily. Homodimer. Requires Zn(2+) as cofactor.

The protein resides in the cytoplasm. The enzyme catalyses tRNA(Met) + L-methionine + ATP = L-methionyl-tRNA(Met) + AMP + diphosphate. In terms of biological role, is required not only for elongation of protein synthesis but also for the initiation of all mRNA translation through initiator tRNA(fMet) aminoacylation. The protein is Methionine--tRNA ligase of Psychrobacter sp. (strain PRwf-1).